We begin with the raw amino-acid sequence, 446 residues long: Sulfoquinovose isomerase (446 aa).

The protein belongs to the SqvD family.

The enzyme catalyses 6-sulfo-beta-D-quinovose = 6-deoxy-6-sulfo-D-fructose. Its function is as follows. Part of the sulfo-TAL (or sulfo-SFT) pathway, a D-sulfoquinovose degradation pathway that produces sulfolactate (SL). Catalyzes the isomerization of sulfoquinovose (SQ) to 6-deoxy-6-sulfo-D-fructose (SF). This Priestia aryabhattai (Bacillus aryabhattai) protein is Sulfoquinovose isomerase.